A 211-amino-acid polypeptide reads, in one-letter code: Probable nicotinate-nucleotide adenylyltransferase (211 aa).

This sequence belongs to the NadD family.

The enzyme catalyses nicotinate beta-D-ribonucleotide + ATP + H(+) = deamido-NAD(+) + diphosphate. Its pathway is cofactor biosynthesis; NAD(+) biosynthesis; deamido-NAD(+) from nicotinate D-ribonucleotide: step 1/1. Functionally, catalyzes the reversible adenylation of nicotinate mononucleotide (NaMN) to nicotinic acid adenine dinucleotide (NaAD). This Corynebacterium kroppenstedtii (strain DSM 44385 / JCM 11950 / CIP 105744 / CCUG 35717) protein is Probable nicotinate-nucleotide adenylyltransferase.